The following is a 586-amino-acid chain: Phosphomethylpyrimidine synthase (586 aa).

Residues 1 to 59 (MKQSVSAEQIELKSSLPGSKKVYVDGPREGMKVPMREIEQSDTNGVPNPPIRVYDTSGP) are disordered. Over residues 22–39 (VYVDGPREGMKVPMREIE) the composition is skewed to basic and acidic residues. Residues N193, M222, Y251, H287, 307-309 (SRG), 348-351 (DGLR), and E387 each bind substrate. H391 is a Zn(2+) binding site. Y414 is a binding site for substrate. H455 serves as a coordination point for Zn(2+). [4Fe-4S] cluster-binding residues include C535, C538, and C543.

This sequence belongs to the ThiC family. [4Fe-4S] cluster serves as cofactor.

The catalysed reaction is 5-amino-1-(5-phospho-beta-D-ribosyl)imidazole + S-adenosyl-L-methionine = 4-amino-2-methyl-5-(phosphooxymethyl)pyrimidine + CO + 5'-deoxyadenosine + formate + L-methionine + 3 H(+). Its pathway is cofactor biosynthesis; thiamine diphosphate biosynthesis. Catalyzes the synthesis of the hydroxymethylpyrimidine phosphate (HMP-P) moiety of thiamine from aminoimidazole ribotide (AIR) in a radical S-adenosyl-L-methionine (SAM)-dependent reaction. This Bacillus cereus (strain ATCC 10987 / NRS 248) protein is Phosphomethylpyrimidine synthase.